A 432-amino-acid chain; its full sequence is Enolase (432 aa).

Gln167 contacts (2R)-2-phosphoglycerate. The active-site Proton donor is Glu209. 3 residues coordinate Mg(2+): Asp246, Glu290, and Asp317. (2R)-2-phosphoglycerate is bound by residues Lys342, Arg371, Ser372, and Lys393. Lys342 functions as the Proton acceptor in the catalytic mechanism.

Belongs to the enolase family. Component of the RNA degradosome, a multiprotein complex involved in RNA processing and mRNA degradation. Mg(2+) serves as cofactor.

Its subcellular location is the cytoplasm. It localises to the secreted. The protein localises to the cell surface. The enzyme catalyses (2R)-2-phosphoglycerate = phosphoenolpyruvate + H2O. Its pathway is carbohydrate degradation; glycolysis; pyruvate from D-glyceraldehyde 3-phosphate: step 4/5. Catalyzes the reversible conversion of 2-phosphoglycerate (2-PG) into phosphoenolpyruvate (PEP). It is essential for the degradation of carbohydrates via glycolysis. This chain is Enolase, found in Salmonella agona (strain SL483).